A 148-amino-acid chain; its full sequence is Large ribosomal subunit protein bL9 (148 aa).

The protein belongs to the bacterial ribosomal protein bL9 family.

Its function is as follows. Binds to the 23S rRNA. The chain is Large ribosomal subunit protein bL9 from Pseudomonas syringae pv. tomato (strain ATCC BAA-871 / DC3000).